A 338-amino-acid polypeptide reads, in one-letter code: Ketol-acid reductoisomerase (NADP(+)) (338 aa).

One can recognise a KARI N-terminal Rossmann domain in the interval 1–181 (MQVYYDKDCD…GGGRTGIIET (181 aa)). Residues 24–27 (FGSQ), arginine 47, serine 50, serine 52, and 82–85 (DEFQ) contribute to the NADP(+) site. Histidine 107 is a catalytic residue. Glycine 133 is a binding site for NADP(+). The KARI C-terminal knotted domain maps to 182–327 (TFKDETETDL…EKLRSMMPWI (146 aa)). Mg(2+)-binding residues include aspartate 190, glutamate 194, glutamate 226, and glutamate 230. Serine 251 contributes to the substrate binding site.

It belongs to the ketol-acid reductoisomerase family. Mg(2+) is required as a cofactor.

It catalyses the reaction (2R)-2,3-dihydroxy-3-methylbutanoate + NADP(+) = (2S)-2-acetolactate + NADPH + H(+). The catalysed reaction is (2R,3R)-2,3-dihydroxy-3-methylpentanoate + NADP(+) = (S)-2-ethyl-2-hydroxy-3-oxobutanoate + NADPH + H(+). The protein operates within amino-acid biosynthesis; L-isoleucine biosynthesis; L-isoleucine from 2-oxobutanoate: step 2/4. Its pathway is amino-acid biosynthesis; L-valine biosynthesis; L-valine from pyruvate: step 2/4. Its function is as follows. Involved in the biosynthesis of branched-chain amino acids (BCAA). Catalyzes an alkyl-migration followed by a ketol-acid reduction of (S)-2-acetolactate (S2AL) to yield (R)-2,3-dihydroxy-isovalerate. In the isomerase reaction, S2AL is rearranged via a Mg-dependent methyl migration to produce 3-hydroxy-3-methyl-2-ketobutyrate (HMKB). In the reductase reaction, this 2-ketoacid undergoes a metal-dependent reduction by NADPH to yield (R)-2,3-dihydroxy-isovalerate. The polypeptide is Ketol-acid reductoisomerase (NADP(+)) (Marinobacter nauticus (strain ATCC 700491 / DSM 11845 / VT8) (Marinobacter aquaeolei)).